An 807-amino-acid polypeptide reads, in one-letter code: MKEWKSKMEISEEKKSARAASEKLQRQITQECELVETSNSEDRLLKHWVSPLKDAMRHLPSQESGIREMHIIPQKAIVGEIGHGCNEGEKILSAGESSHRYEVSGQNFKQKSGLTEHQKIHNINKTYECKECEKTFNRSSNLIIHQRIHTGNKPYVCNECGKDSNQSSNLIIHQRIHTGKKPYICHECGKDFNQSSNLVRHKQIHSGGNPYECKECGKAFKGSSNLVLHQRIHSRGKPYLCNKCGKAFSQSTDLIIHHRIHTGEKPYECYDCGQMFSQSSHLVPHQRIHTGEKPLKCNECEKAFRQHSHLTEHQRLHSGEKPYECHRCGKTFSGRTAFLKHQRLHAGEKIEECEKTFSKDEELREEQRIHQEEKAYWCNQCGRNFQGTSDLIRHQVTHTGEKPYECKECGKTFNQSSDLLRHHRIHSGEKPCVCSKCGKSFRGSSDLIRHHRVHTGEKPYECSECGKAFSQRSHLVTHQKIHTGEKPYQCTECGKAFRRRSLLIQHRRIHSGEKPYECKECGKLFIWRTAFLKHQSLHTGEKLECEKTFSQDEELRGEQKIHQEAKAYWCNQCGRAFQGSSDLIRHQVTHTREKPYECKECGKTFNQSSDLLRHHRIHSGEKPYVCNKCGKSFRGSSDLIKHHRIHTGEKPYECSECGKAFSQRSHLATHQKIHTGEKPYQCSECGNAFRRRSLLIQHRRLHSGEKPYECKECGKLFMWHTAFLKHQRLHAGEKLEECEKTFSKDEELRKEQRTHQEKKVYWCNQCSRTFQGSSDLIRHQVTHTREKPYECKECGKTQSELRPSETS.

The disordered stretch occupies residues 1–23; the sequence is MKEWKSKMEISEEKKSARAASEK. 8 C2H2-type zinc fingers span residues 127–149, 155–177, 183–205, 211–233, 239–261, 267–289, 295–317, and 323–345; these read YECK…QRIH, YVCN…QRIH, YICH…KQIH, YLCN…HRIH, YECY…QRIH, LKCN…QRLH, and YECH…QRLH. The C2H2-type 9; degenerate zinc finger occupies 348–370; the sequence is EKIEECEKTFSKDEELREEQRIH. 6 consecutive C2H2-type zinc fingers follow at residues 376–398, 404–426, 432–454, 460–482, 488–510, and 516–538; these read YWCN…QVTH, YECK…HRIH, CVCS…HRVH, YECS…QKIH, YQCT…RRIH, and YECK…QSLH. Residues 543–562 form a C2H2-type 16; degenerate zinc finger; that stretch reads LECEKTFSQDEELRGEQKIH. 6 consecutive C2H2-type zinc fingers follow at residues 568–590, 596–618, 624–646, 652–674, 680–702, and 708–730; these read YWCN…QVTH, YECK…HRIH, YVCN…HRIH, YECS…QKIH, YQCS…RRLH, and YECK…QRLH. Residues 733–755 form a C2H2-type 23; degenerate zinc finger; the sequence is EKLEECEKTFSKDEELRKEQRTH. The segment at 761–783 adopts a C2H2-type 24 zinc-finger fold; that stretch reads YWCNQCSRTFQGSSDLIRHQVTH.

The protein belongs to the krueppel C2H2-type zinc-finger protein family.

The protein resides in the nucleus. Functionally, may be involved in transcriptional regulation. The chain is Zinc finger protein 594 (ZNF594) from Homo sapiens (Human).